The following is a 298-amino-acid chain: Cytidine deaminase (298 aa).

CMP/dCMP-type deaminase domains lie at 47 to 167 (TEQQ…FGPS) and 186 to 298 (DSDD…PLLG). Residue 88–90 (NLE) coordinates substrate. Zn(2+) is bound at residue H101. E103 acts as the Proton donor in catalysis. 2 residues coordinate Zn(2+): C128 and C131.

The protein belongs to the cytidine and deoxycytidylate deaminase family. Homodimer. Zn(2+) serves as cofactor.

It carries out the reaction cytidine + H2O + H(+) = uridine + NH4(+). The enzyme catalyses 2'-deoxycytidine + H2O + H(+) = 2'-deoxyuridine + NH4(+). This enzyme scavenges exogenous and endogenous cytidine and 2'-deoxycytidine for UMP synthesis. This chain is Cytidine deaminase, found in Shewanella frigidimarina (strain NCIMB 400).